The sequence spans 531 residues: Flavin-containing monooxygenase 3 (531 aa).

FAD contacts are provided by residues 9–13 (GAGIS), Glu32, 40–41 (LW), and 61–62 (NS). Residues 60–61 (TN) and 195–198 (SGCD) contribute to the NADP(+) site. A helical membrane pass occupies residues 511–531 (FSPWLKLLAIAVLLIAAVLVF).

It belongs to the FMO family. FAD is required as a cofactor. As to expression, liver.

It is found in the microsome membrane. Its subcellular location is the endoplasmic reticulum membrane. The catalysed reaction is trimethylamine + NADPH + O2 = trimethylamine N-oxide + NADP(+) + H2O. The enzyme catalyses N,N-dimethylaniline + NADPH + O2 + H(+) = N,N-dimethylaniline N-oxide + NADP(+) + H2O. It catalyses the reaction hypotaurine + NADPH + O2 + H(+) = taurine + NADP(+) + H2O. It carries out the reaction (S)-nicotine + NADPH + O2 = trans-(S)-nicotine N(1')-oxide + NADP(+) + H2O. The catalysed reaction is albendazole + NADPH + O2 + H(+) = albendazole S-oxide + NADP(+) + H2O. Its function is as follows. Essential hepatic enzyme that catalyzes the oxygenation of a wide variety of nitrogen- and sulfur-containing compounds including drugs as well as dietary compounds. Plays an important role in the metabolism of trimethylamine (TMA), via the production of trimethylamine N-oxide (TMAO) metabolite. TMA is generated by the action of gut microbiota using dietary precursors such as choline, choline containing compounds, betaine or L-carnitine. By regulating TMAO concentration, FMO3 directly impacts both platelet responsiveness and rate of thrombus formation. The protein is Flavin-containing monooxygenase 3 (FMO3) of Oryctolagus cuniculus (Rabbit).